The primary structure comprises 510 residues: ATP synthase subunit alpha (510 aa).

170-177 contributes to the ATP binding site; it reads GDRQTGKT.

The protein belongs to the ATPase alpha/beta chains family. In terms of assembly, F-type ATPases have 2 components, CF(1) - the catalytic core - and CF(0) - the membrane proton channel. CF(1) has five subunits: alpha(3), beta(3), gamma(1), delta(1), epsilon(1). CF(0) has three main subunits: a(1), b(2) and c(9-12). The alpha and beta chains form an alternating ring which encloses part of the gamma chain. CF(1) is attached to CF(0) by a central stalk formed by the gamma and epsilon chains, while a peripheral stalk is formed by the delta and b chains.

It is found in the cell inner membrane. It catalyses the reaction ATP + H2O + 4 H(+)(in) = ADP + phosphate + 5 H(+)(out). In terms of biological role, produces ATP from ADP in the presence of a proton gradient across the membrane. The alpha chain is a regulatory subunit. The chain is ATP synthase subunit alpha from Maricaulis maris (strain MCS10) (Caulobacter maris).